A 193-amino-acid polypeptide reads, in one-letter code: Activity-regulated cytoskeleton associated protein 2 (193 aa).

The protein belongs to the ARC/ARG3.1 family. Homooligomer; homooligomerizes into virion-like capsids.

The protein resides in the extracellular vesicle membrane. Its function is as follows. Self-assembles into virion-like capsids that encapsulate RNAs and mediate intercellular RNA transfer. Arc2 protein is released from cells in extracellular vesicles that mediate the transfer of mRNA into neighboring cells. This is Activity-regulated cytoskeleton associated protein 2 from Drosophila melanogaster (Fruit fly).